Here is a 623-residue protein sequence, read N- to C-terminus: Lamin-B2.L (623 aa).

The span at 1-18 (MATTTPSRSTRSSMQSPA) shows a compositional bias: low complexity. Residues 1–30 (MATTTPSRSTRSSMQSPARGTSTPLSPTRI) form a disordered region. A head region spans residues 2 to 27 (ATTTPSRSTRSSMQSPARGTSTPLSP). Residues 19–30 (RGTSTPLSPTRI) are compositionally biased toward polar residues. A Phosphoserine modification is found at serine 26. The tract at residues 28–64 (TRISRLQEKEELRHLNDRLAVYIDRVRALELENDRLM) is coil 1A. Residues 35 to 391 (EKEELRHLND…KLLEGEEERL (357 aa)) form the IF rod domain. The tract at residues 64 to 74 (MVKISEKEEVT) is linker 1. Residues 75 to 211 (TREVSGIKNL…QSLQEEMDFR (137 aa)) form a coil 1B region. Positions 212–235 (KNIYEEESRETRKRHERRIVEVDR) are linker 2. Residues 236 to 378 (GHHYDYESKL…VKLALDLEIN (143 aa)) form a coil 2 region. The segment at 380–592 (YRKLLEGEEE…VTKSVLRNVE (213 aa)) is tail. 2 disordered regions span residues 388 to 473 (EERL…LSQQ) and 591 to 623 (VEEE…CSVM). Serine 396 carries the post-translational modification Phosphoserine. Over residues 398–416 (ESRVTVSRATSSSSSATRT) the composition is skewed to low complexity. Positions 420–425 (KRRRVE) match the Nuclear localization signal motif. The span at 443–473 (LGSSRITASEGSSRTITSGQSSTTRFHLSQQ) shows a compositional bias: polar residues. In terms of domain architecture, LTD spans 468 to 585 (FHLSQQASAT…EEVAVRTVTK (118 aa)). A compositionally biased stretch (acidic residues) spans 592–604 (EEEEDEDADFGEE). A compositionally biased stretch (polar residues) spans 612–623 (DPRTTSRGCSVM). Residue cysteine 620 is modified to Cysteine methyl ester. Cysteine 620 carries the S-farnesyl cysteine lipid modification. Residues 621–623 (SVM) constitute a propeptide, removed in mature form.

It belongs to the intermediate filament family. Post-translationally, phosphorylation plays a key role in lamin organization, subcellular localization and nuclear envelope disintegration. Phosphorylation by CDK1 at Ser-26 at the onset of mitosis drives lamin disassembly and nuclear envelope breakdown.

It localises to the nucleus lamina. Its subcellular location is the nucleus envelope. It is found in the nucleus. The protein localises to the nucleoplasm. The protein resides in the nucleus matrix. In terms of biological role, lamins are intermediate filament proteins that assemble into a filamentous meshwork, and which constitute the major components of the nuclear lamina, a fibrous layer on the nucleoplasmic side of the inner nuclear membrane. Lamins provide a framework for the nuclear envelope, bridging the nuclear envelope and chromatin, thereby playing an important role in nuclear assembly, chromatin organization, nuclear membrane and telomere dynamics. The structural integrity of the lamina is strictly controlled by the cell cycle, as seen by the disintegration and formation of the nuclear envelope in prophase and telophase, respectively. This is Lamin-B2.L (lmnb2.L) from Xenopus laevis (African clawed frog).